We begin with the raw amino-acid sequence, 654 residues long: APC membrane recruitment protein 2 (654 aa).

4 disordered regions span residues 1–105 (MEVQ…TAPL), 224–289 (ECGN…QSEQ), 316–369 (IIAD…PQVS), and 381–654 (PAHQ…QSRK). Residues 9–18 (EPPPCDPQPP) are compositionally biased toward pro residues. Over residues 60–70 (ELVRSKTHDGL) the composition is skewed to basic and acidic residues. The segment covering 427–454 (PQKDEDSPAPRRAEPVLHHAPARLEKRP) has biased composition (basic and acidic residues). A compositionally biased stretch (polar residues) spans 468–479 (SGSSKTGKQQPS). Residues 565 to 575 (SPKCSSSATSS) show a composition bias toward low complexity. A compositionally biased stretch (polar residues) spans 576–586 (FRSMKGSTSLP). The span at 601 to 621 (SHSSSQGALSSNLSPTSTTPP) shows a compositional bias: low complexity. The segment covering 644 to 654 (GKSTSTSQSRK) has biased composition (polar residues).

This sequence belongs to the Amer family.

The protein localises to the cell membrane. Functionally, negative regulator of the canonical Wnt signaling pathway involved in neuroectodermal patterning. Acts by specifically binding phosphatidylinositol 4,5-bisphosphate (PtdIns(4,5)P2), translocating to the cell membrane and interacting with key regulators of the canonical Wnt signaling pathway, such as components of the beta-catenin destruction complex. This chain is APC membrane recruitment protein 2 (amer2), found in Danio rerio (Zebrafish).